The following is a 142-amino-acid chain: Hemoglobin A subunit alpha-2 (142 aa).

Residues 2–142 (VLTAGDKANV…VAQNLTSKYR (141 aa)) form the Globin domain. Residue His-59 participates in O2 binding. His-88 lines the heme b pocket.

It belongs to the globin family. Tetramer of alpha-1, alpha-2 and two identical beta chains. Red blood cells.

In terms of biological role, involved in oxygen transport from the lung to the various peripheral tissues. The sequence is that of Hemoglobin A subunit alpha-2 from Aldabrachelys gigantea (Aldabra giant tortoise).